The sequence spans 157 residues: Methylamine utilization protein MauL (157 aa).

It functions in the pathway one-carbon metabolism; methylamine degradation. Probably involved in TTQ prosthetic group biosynthesis. In Methylobacillus flagellatus (strain ATCC 51484 / DSM 6875 / VKM B-1610 / KT), this protein is Methylamine utilization protein MauL (mauL).